Consider the following 498-residue polypeptide: Thiamine transporter 1 (498 aa).

The residue at position 1 (M1) is an N-acetylmethionine. At 1–28 (MDVPARVSRRAAAAAARMLLRTARVPRE) the chain is on the cytoplasmic side. Residues 29 to 46 (CWFLPTALLCAYGFFANL) traverse the membrane as a helical segment. Topologically, residues 47–71 (RPSEPFLTPYLLGPDKNLTERQVYN) are extracellular. N-linked (GlcNAc...) asparagine glycosylation occurs at N63. Residues 72-92 (EIYPVWTYSYLLLLFPVFLAT) form a helical membrane-spanning segment. Residues 93-105 (DYLRYKPVILLQG) are Cytoplasmic-facing. The helical transmembrane segment at 106-126 (LSLIVTWFMLLYAQGLLAIQF) threads the bilayer. Residues 127–128 (LE) lie on the Extracellular side of the membrane. The helical transmembrane segment at 129 to 149 (FFYGIATATEIAYYSYIYTVV) threads the bilayer. The Cytoplasmic portion of the chain corresponds to 150 to 164 (DLGMYQKVTSYCRSA). The chain crosses the membrane as a helical span at residues 165–185 (TLVGFTVGSVLGQILVSVVGW). Residue S186 is a topological domain, extracellular. Residues 187–207 (LFSLNVISLTCVSVAFAVAWF) traverse the membrane as a helical segment. Residues 208 to 295 (LPMPQKSLFF…DFLMCYSSRP (88 aa)) are Cytoplasmic-facing. S222 carries the phosphoserine modification. The helical transmembrane segment at 296–316 (LLCWSVWWALSTCGYFQVVNY) threads the bilayer. Residues 317 to 334 (AQGLWEKVMPSQNADIYN) are Extracellular-facing. Residues 335–355 (GGVEAVSTLLGASAVFAVGYI) form a helical membrane-spanning segment. Topologically, residues 356–360 (KLSWS) are cytoplasmic. The helical transmembrane segment at 361–381 (TWGEMTLFLCSLLIAAAVYVM) threads the bilayer. At 382–386 (DTVQS) the chain is on the extracellular side. A helical transmembrane segment spans residues 387–407 (IWVCYASYVVFRIIYMVLITI). The Cytoplasmic portion of the chain corresponds to 408–423 (ATFQIAANLSMERYAL). Residues 424–444 (VFGVNTFIALALQTLLTLIVV) traverse the membrane as a helical segment. Topologically, residues 445 to 456 (DARGLGLCITTQ) are extracellular. The chain crosses the membrane as a helical span at residues 457–477 (FLIYASYFAAISVVFLANGIV). Residues 478–498 (SIIKKCRKQEDPSSSPQASTS) lie on the Cytoplasmic side of the membrane.

This sequence belongs to the reduced folate carrier (RFC) transporter (TC 2.A.48) family. Interacts with TSPAN1; this interaction increases the stability of SLC19A2. Interacts with TMEM63B. Expressed in liver. Expressed in cochlear hair cells and duodenum (at protein level). Detected in pancreatic acinar cells (at protein level). Also expressed strongly in pancreatic islet cells. Expressed in the testis. In terms of tissue distribution, very highly expressed in liver, and also detected at lower levels in heart, testis, kidney, brain and spleen. As to expression, expressed at low levels in liver and spleen.

The protein localises to the cell membrane. It carries out the reaction thiamine(out) + H(+)(in) = thiamine(in) + H(+)(out). It catalyses the reaction pyridoxine(out) + n H(+)(out) = pyridoxine(in) + n H(+)(in). High-affinity transporter for the intake of thiamine. Essential for spermatogenesis. Mediates H(+)-dependent pyridoxine transport. This chain is Thiamine transporter 1, found in Mus musculus (Mouse).